The following is a 207-amino-acid chain: Ribosomal RNA large subunit methyltransferase E (207 aa).

Positions 56, 58, 76, 94, and 116 each coordinate S-adenosyl-L-methionine. The Proton acceptor role is filled by lysine 156.

This sequence belongs to the class I-like SAM-binding methyltransferase superfamily. RNA methyltransferase RlmE family.

The protein localises to the cytoplasm. It carries out the reaction uridine(2552) in 23S rRNA + S-adenosyl-L-methionine = 2'-O-methyluridine(2552) in 23S rRNA + S-adenosyl-L-homocysteine + H(+). Specifically methylates the uridine in position 2552 of 23S rRNA at the 2'-O position of the ribose in the fully assembled 50S ribosomal subunit. This chain is Ribosomal RNA large subunit methyltransferase E, found in Desulfatibacillum aliphaticivorans.